The following is a 40-amino-acid chain: SGSKTANIGDGCFGVPIDHIGSTSGMGCGSPRPKPTPGGS.

The propeptide occupies 1–8; sequence SGSKTANI. The tract at residues 1–40 is disordered; that stretch reads SGSKTANIGDGCFGVPIDHIGSTSGMGCGSPRPKPTPGGS. A disulfide bridge connects residues Cys-12 and Cys-28.

Belongs to the natriuretic peptide family. As to expression, expressed by the venom gland.

It is found in the secreted. Its function is as follows. Snake venom natriuretic peptide that targets both NPR1 and NPR2. Exhibits hypotensive and vasodepressor activities. The polypeptide is Natriuretic peptide PpNP-a (Pseudechis porphyriacus (Red-bellied black snake)).